Reading from the N-terminus, the 206-residue chain is Large ribosomal subunit protein uL4 (206 aa).

Positions 63 to 96 are disordered; sequence MYKQKGTGRARHHSARAPQFRGGGKAHGPVVRSH. The span at 64 to 77 shows a compositional bias: basic residues; the sequence is YKQKGTGRARHHSA.

Belongs to the universal ribosomal protein uL4 family. Part of the 50S ribosomal subunit.

In terms of biological role, one of the primary rRNA binding proteins, this protein initially binds near the 5'-end of the 23S rRNA. It is important during the early stages of 50S assembly. It makes multiple contacts with different domains of the 23S rRNA in the assembled 50S subunit and ribosome. Forms part of the polypeptide exit tunnel. The polypeptide is Large ribosomal subunit protein uL4 (Allorhizobium ampelinum (strain ATCC BAA-846 / DSM 112012 / S4) (Agrobacterium vitis (strain S4))).